A 590-amino-acid polypeptide reads, in one-letter code: Muscarinic acetylcholine receptor M3 (590 aa).

Topologically, residues 1–67 (MTLHNNNTTS…DPLGGHTIWQ (67 aa)) are extracellular. N-linked (GlcNAc...) asparagine glycans are attached at residues asparagine 6, asparagine 7, asparagine 15, asparagine 41, asparagine 48, and asparagine 53. A helical transmembrane segment spans residues 68 to 91 (VVFIAFLTGILALVTIIGNILVIV). Residues 92 to 104 (AFKVNKQLKTVNN) are Cytoplasmic-facing. The helical transmembrane segment at 105–130 (YFLLSLACADLIIGVISMNLFTTYII) threads the bilayer. Over 131–142 (MNRWALGNLACD) the chain is Extracellular. Cysteines 141 and 221 form a disulfide. The helical transmembrane segment at 143 to 164 (LWLSIDYVASNASVMNLLVISF) threads the bilayer. Topologically, residues 165-184 (DRYFSITRPLTYRAKRTTKR) are cytoplasmic. The chain crosses the membrane as a helical span at residues 185–206 (AGVMIGLAWVISFILWAPAILF). At 207 to 229 (WQYFVGKRTVPPGECFIQFLSEP) the chain is on the extracellular side. Residues 230 to 252 (TITFGTAIAAFYMPVTIMTILYW) form a helical membrane-spanning segment. Over 253-491 (RIYKETEKRT…SLIKEKKAAQ (239 aa)) the chain is Cytoplasmic. The Basolateral sorting signal signature appears at 275 to 281 (AEAENFV). Residues 324 to 357 (AEQMDQDHSSSDSWNNNDAAASLENSASSDEEDI) form a disordered region. The span at 334–345 (SDSWNNNDAAAS) shows a compositional bias: low complexity. Residue serine 385 is modified to Phosphoserine. Residues 492-514 (TLSAILLAFIITWTPYNIMVLVN) traverse the membrane as a helical segment. Residues 515-526 (TFCDSCIPKTYW) are Extracellular-facing. Cysteines 517 and 520 form a disulfide. Residues 527–546 (NLGYWLCYINSTVNPVCYAL) form a helical membrane-spanning segment. The Cytoplasmic segment spans residues 547-590 (CNKTFRTTFKMLLLCQCDKRKRRKQQYQQRQSVIFHKRVPEQAL).

This sequence belongs to the G-protein coupled receptor 1 family. Muscarinic acetylcholine receptor subfamily. CHRM3 sub-subfamily. In terms of assembly, homodimer; the dimers can form tetramers. Interacts with NALCN. Interacts with TMEM147.

The protein resides in the cell membrane. The protein localises to the postsynaptic cell membrane. It localises to the basolateral cell membrane. Its subcellular location is the endoplasmic reticulum membrane. The muscarinic acetylcholine receptor mediates various cellular responses, including inhibition of adenylate cyclase, breakdown of phosphoinositides and modulation of potassium channels through the action of G proteins. Primary transducing effect is Pi turnover. The chain is Muscarinic acetylcholine receptor M3 (CHRM3) from Sus scrofa (Pig).